A 461-amino-acid chain; its full sequence is D-phenylhydantoinase (461 aa).

The a divalent metal cation site is built by H59, H61, and K151. The residue at position 151 (K151) is an N6-carboxylysine. Y156 provides a ligand contact to substrate. A divalent metal cation-binding residues include H182 and H239. S286 serves as a coordination point for substrate. D313 provides a ligand contact to a divalent metal cation. N335 contacts substrate.

It belongs to the metallo-dependent hydrolases superfamily. Hydantoinase/dihydropyrimidinase family. In terms of assembly, homotetramer. Zn(2+) is required as a cofactor. It depends on Ni(2+) as a cofactor. Requires Co(2+) as cofactor. The cofactor is Mn(2+). Post-translationally, carboxylation allows a single lysine to coordinate two divalent metal cations.

The catalysed reaction is D-5-phenylhydantoin + H2O = N-carbamoyl-D-phenylglycine + H(+). Functionally, catalyzes the stereospecific hydrolysis of the cyclic amide bond of D-hydantoin derivatives with an aromatic side chains at the 5'-position. Has no activity on dihydropyrimidines. The physiological function is unknown. The sequence is that of D-phenylhydantoinase (hyuA) from Escherichia coli (strain K12).